Consider the following 229-residue polypeptide: Peptidase E (229 aa).

Catalysis depends on charge relay system residues Ser120, Asp135, and His157.

It belongs to the peptidase S51 family.

It is found in the cytoplasm. It catalyses the reaction Dipeptidase E catalyzes the hydrolysis of dipeptides Asp-|-Xaa. It does not act on peptides with N-terminal Glu, Asn or Gln, nor does it cleave isoaspartyl peptides.. In terms of biological role, hydrolyzes dipeptides containing N-terminal aspartate residues. May play a role in allowing the cell to use peptide aspartate to spare carbon otherwise required for the synthesis of the aspartate family of amino acids. The protein is Peptidase E of Salmonella schwarzengrund (strain CVM19633).